We begin with the raw amino-acid sequence, 91 residues long: DNA-directed RNA polymerase subunit omega (91 aa).

This sequence belongs to the RNA polymerase subunit omega family. In terms of assembly, the RNAP catalytic core consists of 2 alpha, 1 beta, 1 beta' and 1 omega subunit. When a sigma factor is associated with the core the holoenzyme is formed, which can initiate transcription.

It carries out the reaction RNA(n) + a ribonucleoside 5'-triphosphate = RNA(n+1) + diphosphate. Its function is as follows. Promotes RNA polymerase assembly. Latches the N- and C-terminal regions of the beta' subunit thereby facilitating its interaction with the beta and alpha subunits. This is DNA-directed RNA polymerase subunit omega from Sodalis glossinidius (strain morsitans).